The primary structure comprises 488 residues: ATP synthase subunit beta (488 aa).

Residue 164-171 (GGAGVGKT) participates in ATP binding.

This sequence belongs to the ATPase alpha/beta chains family. In terms of assembly, F-type ATPases have 2 components, CF(1) - the catalytic core - and CF(0) - the membrane proton channel. CF(1) has five subunits: alpha(3), beta(3), gamma(1), delta(1), epsilon(1). CF(0) has four main subunits: a(1), b(1), b'(1) and c(9-12).

It localises to the cellular thylakoid membrane. It catalyses the reaction ATP + H2O + 4 H(+)(in) = ADP + phosphate + 5 H(+)(out). In terms of biological role, produces ATP from ADP in the presence of a proton gradient across the membrane. The catalytic sites are hosted primarily by the beta subunits. This is ATP synthase subunit beta from Prochlorococcus marinus (strain MIT 9211).